The chain runs to 160 residues: Small ribosomal subunit protein uS7 (160 aa).

This sequence belongs to the universal ribosomal protein uS7 family. In terms of assembly, part of the 30S ribosomal subunit. Contacts proteins S9 and S11.

In terms of biological role, one of the primary rRNA binding proteins, it binds directly to 16S rRNA where it nucleates assembly of the head domain of the 30S subunit. Is located at the subunit interface close to the decoding center, probably blocks exit of the E-site tRNA. This is Small ribosomal subunit protein uS7 from Ehrlichia chaffeensis (strain ATCC CRL-10679 / Arkansas).